The primary structure comprises 36 residues: Beta-amanitin proprotein (36 aa).

Positions 1-10 (MSDINATRLP) are excised as a propeptide. The segment at residues 11 to 18 (IWGIGCDP) is a cross-link (cyclopeptide (Ile-Pro)). The 2'-cysteinyl-6'-hydroxytryptophan sulfoxide (Trp-Cys) cross-link spans 12 to 16 (WGIGC). Positions 19–36 (CIGDDVTALLTRGEASLC) are excised as a propeptide.

The protein belongs to the MSDIN fungal toxin family. Processed by the macrocyclase-peptidase enzyme POPB to yield a toxic cyclic decapeptide. POPB first removes 10 residues from the N-terminus. Conformational trapping of the remaining peptide forces the enzyme to release this intermediate rather than proceed to macrocyclization. The enzyme rebinds the remaining peptide in a different conformation and catalyzes macrocyclization of the N-terminal 8 residues.

Its function is as follows. Toxin belonging to the bicyclic octapeptides amatoxins that acts by binding non-competitively to RNA polymerase II and greatly slowing the elongation of transcripts from target promoters. The chain is Beta-amanitin proprotein from Amanita phalloides (Death cap).